A 175-amino-acid chain; its full sequence is ATP synthase subunit delta (175 aa).

Belongs to the ATPase delta chain family. In terms of assembly, F-type ATPases have 2 components, F(1) - the catalytic core - and F(0) - the membrane proton channel. F(1) has five subunits: alpha(3), beta(3), gamma(1), delta(1), epsilon(1). F(0) has three main subunits: a(1), b(2) and c(10-14). The alpha and beta chains form an alternating ring which encloses part of the gamma chain. F(1) is attached to F(0) by a central stalk formed by the gamma and epsilon chains, while a peripheral stalk is formed by the delta and b chains.

The protein resides in the cell inner membrane. Its function is as follows. F(1)F(0) ATP synthase produces ATP from ADP in the presence of a proton or sodium gradient. F-type ATPases consist of two structural domains, F(1) containing the extramembraneous catalytic core and F(0) containing the membrane proton channel, linked together by a central stalk and a peripheral stalk. During catalysis, ATP synthesis in the catalytic domain of F(1) is coupled via a rotary mechanism of the central stalk subunits to proton translocation. In terms of biological role, this protein is part of the stalk that links CF(0) to CF(1). It either transmits conformational changes from CF(0) to CF(1) or is implicated in proton conduction. The protein is ATP synthase subunit delta of Stenotrophomonas maltophilia (strain R551-3).